A 1588-amino-acid chain; its full sequence is Ubiquitin carboxyl-terminal hydrolase 54 (1588 aa).

An Omega-N-methylarginine modification is found at arginine 12. Positions lysine 31 to proline 352 constitute a USP domain. Cysteine 42 (nucleophile) is an active-site residue. 12 residues coordinate Zn(2+): histidine 67, cysteine 69, cysteine 74, cysteine 77, histidine 133, cysteine 145, cysteine 150, histidine 153, cysteine 166, cysteine 169, cysteine 225, and cysteine 229. Histidine 302 functions as the Proton acceptor in the catalytic mechanism. Basic and acidic residues-rich tracts occupy residues aspartate 380 to glutamine 391 and serine 424 to alanine 434. 2 disordered regions span residues aspartate 380–leucine 447 and histidine 459–arginine 519. Phosphoserine is present on serine 424. Polar residues-rich tracts occupy residues arginine 436–serine 445 and histidine 459–alanine 471. The segment covering threonine 499–serine 512 has biased composition (low complexity). Serine 574, serine 613, and serine 616 each carry phosphoserine. Over residues glutamate 601 to serine 616 the composition is skewed to low complexity. Positions glutamate 601 to alanine 620 are disordered. The stretch at threonine 678 to glycine 712 forms a coiled coil. 5 disordered regions span residues arginine 801–valine 839, aspartate 856–glycine 895, glutamate 950–aspartate 969, threonine 1093–arginine 1172, and glycine 1525–glutamate 1562. Over residues glutamine 808–serine 825 the composition is skewed to low complexity. Residues serine 878–glycine 895 show a composition bias toward polar residues. Serine 1138 carries the phosphoserine modification. A compositionally biased stretch (basic and acidic residues) spans arginine 1536 to arginine 1547.

The protein belongs to the peptidase C19 family.

The catalysed reaction is Thiol-dependent hydrolysis of ester, thioester, amide, peptide and isopeptide bonds formed by the C-terminal Gly of ubiquitin (a 76-residue protein attached to proteins as an intracellular targeting signal).. Its function is as follows. Deubiquitinase that specifically mediates 'Lys-63'-linked deubiquitination of substrates with a polyubiquitin chain composed of at least 3 ubiquitins. Specifically recognizes ubiquitin chain in position S2 and catalyzes cleavage of polyubiquitin within 'Lys-63'-linked chains. Not able to deubiquitinate substrates with shorter ubiquitin chains. Mediates deubiquitination of PLK4, maintaining PLK4 stability by reducing its ubiquitination-mediated degradation. In Rattus norvegicus (Rat), this protein is Ubiquitin carboxyl-terminal hydrolase 54 (Usp54).